A 538-amino-acid chain; its full sequence is Phosphoenolpyruvate carboxykinase (ATP) (538 aa).

Residues R64, Y205, and K211 each contribute to the substrate site. Residues K211, H230, and 246–254 (GLSGTGKTT) each bind ATP. Positions 211 and 230 each coordinate Mn(2+). A Mn(2+)-binding site is contributed by D267. ATP contacts are provided by residues E295, R331, 447–448 (RI), and T453. R331 is a binding site for substrate.

Belongs to the phosphoenolpyruvate carboxykinase (ATP) family. As to quaternary structure, monomer. Mn(2+) serves as cofactor.

The protein localises to the cytoplasm. The enzyme catalyses oxaloacetate + ATP = phosphoenolpyruvate + ADP + CO2. Its pathway is carbohydrate biosynthesis; gluconeogenesis. Its function is as follows. Involved in the gluconeogenesis. Catalyzes the conversion of oxaloacetate (OAA) to phosphoenolpyruvate (PEP) through direct phosphoryl transfer between the nucleoside triphosphate and OAA. The protein is Phosphoenolpyruvate carboxykinase (ATP) of Pasteurella multocida (strain Pm70).